We begin with the raw amino-acid sequence, 173 residues long: RNA polymerase sigma factor YlaC (173 aa).

This sequence belongs to the sigma-70 factor family. ECF subfamily.

Functionally, sigma factors are initiation factors that promote the attachment of RNA polymerase to specific initiation sites and are then released. This sigma factor contributes to oxidative stress resistance. This is RNA polymerase sigma factor YlaC (ylaC) from Bacillus subtilis (strain 168).